The following is a 436-amino-acid chain: Cytochrome P450 monooxygenase phqO (436 aa).

Cys377 serves as a coordination point for heme.

This sequence belongs to the cytochrome P450 family. The cofactor is heme.

The protein operates within alkaloid biosynthesis. Functionally, cytochrome P450 monooxygenase; part of the gene cluster that mediates the biosynthesis of paraherquamide, a fungal indole alkaloid that belongs to a family of natural products containing a characteristic bicyclo[2.2.2]diazaoctane core. The first steps in the biosynthesis of paraherquamide is the production of the beta-methyl-proline precursor from L-isoleucine. They require oxidation of a terminally hydroxylated L-isoleucine to the corresponding aldehyde by enzymes which have still to be identified. Spontaneous cyclization and dehydration would yield the 4-methyl pyrolline-5-carboxylic acid, which is then reduced by the pyrroline-5-carboxylate reductase phqD leading to the beta-methyl-proline precursor. The next step of paraherquamide biosynthesis involves coupling of beta-methyl-proline and L-tryptophan by the bimodular NRPS phqB, to produce a monooxopiperazine intermediate. The reductase (R) domain of phqB utilizes NADPH for hydride transfer to reduce the thioester bond of the T domain-tethered linear dipeptide to a hemithioaminal intermediate, which spontaneously cleaves the C-S bond to release the aldehyde product. This compound undergoes spontaneous cyclization and dehydration to give a dienamine which is reverse prenylated at C-2 by the reverse prenyltransferase phqJ. The other prenyltransferase present in the cluster, phqI may be a redundant gene in the pathway. During biosynthetic assembly, the key step to produce the polycyclic core is catalyzed by the bifunctional reductase and intramolecular [4+2] Diels-Alderase, phqE, resulting in formation of the [2.2.2] diazaoctane intermediate preparaherquamide. Following formation of preparaherquamide, an indole 2,3-epoxidation-initiated pinacol-like rearrangement is catalyzed by the phqK FAD-dependent monooxygenase. The prenyltransferase phqA, the cytochrome P450 monooxygenase phqL, and the FAD-linked oxidoreductase phqH (or the cytochrome P450 monooxygenase phqM), are proposed to be involved in the formation of the pyran ring. The FAD-dependent monooxygenase phqK is likely responsible for generation of the spiro-oxindole, and the N-methylation is likely mediated by the phqN methyltransferase leading to the isolable natural product paraherquamide F. However, the order of these biosynthetic steps has still to be determined. In late-stage paraherquamide biosynthesis, the third P450 monooxygenase, phqO, is probably responsible for the C-14 hydroxylation, transforming paraherquamide F to paraherquamide G, and paraherquamide E to the final product paraherquamide A. The expansion from the 6-membered ring pyran (in paraherquamides F and G) to the 7-membered dioxepin ring (in paraherquamides A and E) represents a poorly understood but intriguing process that probably involves the 2-oxoglutarate-dependent dioxygenase phqC. Finally, the remaining members of the paraherquamide cluster, including phqI as well as phqM (or phqH), do not have a clearly prescribed role and appear to be redundant. The chain is Cytochrome P450 monooxygenase phqO from Penicillium fellutanum.